A 147-amino-acid chain; its full sequence is Large ribosomal subunit protein uL15 (147 aa).

The segment at 1–54 is disordered; that stretch reads MRLSDIKPTPGSMKKRTRVGRGIGSGKGKTSGKGHKGQKARGRGKVHPWFEGGQ. Basic residues predominate over residues 30–46; it reads TSGKGHKGQKARGRGKV.

It belongs to the universal ribosomal protein uL15 family. As to quaternary structure, part of the 50S ribosomal subunit.

Functionally, binds to the 23S rRNA. The chain is Large ribosomal subunit protein uL15 from Thermosipho melanesiensis (strain DSM 12029 / CIP 104789 / BI429).